A 448-amino-acid polypeptide reads, in one-letter code: Selenide, water dikinase 2 (448 aa).

Alanine 2 carries the N-acetylalanine modification. Serine 46 is modified (phosphoserine). Selenocysteine 60 is an active-site residue. A non-standard amino acid (selenocysteine) is located at residue selenocysteine 60. An ATP-binding site is contributed by lysine 63. The tract at residues 85–107 (LGRGLVGGQEEASQEAGLPAGAG) is disordered. Serine 97 carries the phosphoserine modification. Residues 118–120 (GMD), aspartate 138, aspartate 161, and 212–215 (GGQT) contribute to the ATP site. Mg(2+) is bound at residue aspartate 120. Aspartate 161 lines the Mg(2+) pocket. Position 316 (aspartate 316) interacts with Mg(2+).

It belongs to the selenophosphate synthase 1 family. Class I subfamily. In terms of assembly, homodimer. Requires Mg(2+) as cofactor. In terms of processing, truncated SEPHS2 proteins produced by failed UGA/Sec decoding are ubiquitinated by the CRL2(KLHDC3) complex, which recognizes the glycine (Gly) at the C-terminus of truncated SEPHS2 proteins.

The enzyme catalyses hydrogenselenide + ATP + H2O = selenophosphate + AMP + phosphate + 2 H(+). Functionally, synthesizes selenophosphate from selenide and ATP. The polypeptide is Selenide, water dikinase 2 (SEPHS2) (Homo sapiens (Human)).